A 287-amino-acid polypeptide reads, in one-letter code: Protease HtpX homolog (287 aa).

A run of 2 helical transmembrane segments spans residues 5 to 25 and 28 to 48; these read IRTGLLMAALTALFVAIGYWI and GAGAAIALAFAAAGNFVAYWV. Histidine 131 serves as a coordination point for Zn(2+). Glutamate 132 is a catalytic residue. Zn(2+) is bound at residue histidine 135. The next 2 membrane-spanning stretches (helical) occupy residues 146-166 and 174-194; these read VTATLAGAIGMISNLAIFFGG and PFAGIAGLLLLLLAPLTATLV. Glutamate 203 serves as a coordination point for Zn(2+).

It belongs to the peptidase M48B family. Zn(2+) is required as a cofactor.

It is found in the cell inner membrane. This chain is Protease HtpX homolog, found in Acidiphilium cryptum (strain JF-5).